Reading from the N-terminus, the 237-residue chain is MSNAYKRVLLKLSGEALMGDDAFGINRATIERMVADIAEVVGLGTQLAVVIGGGNIFRGVAGGAAGMDRATADYMGMLATMMNALALQDAMRHAGIVARVQSALRMDQVVEPYIRPRAIRQLEEGKVVIFAAGTGNPFFTTDTAAALRGSEVGAEVVLKATKVDGVYSADPKKDPSATRYATISFDEAISRNLQVMDATAFALCRDQKLPIRVFSINKPGALKRIVLGEDEGTLVHV.

Residue 11 to 14 (KLSG) participates in ATP binding. Position 53 (Gly53) interacts with UMP. 2 residues coordinate ATP: Gly54 and Arg58. UMP-binding positions include Asp73 and 134-141 (TGNPFFTT). ATP is bound by residues Thr161, Tyr167, and Asp170.

The protein belongs to the UMP kinase family. As to quaternary structure, homohexamer.

Its subcellular location is the cytoplasm. The enzyme catalyses UMP + ATP = UDP + ADP. Its pathway is pyrimidine metabolism; CTP biosynthesis via de novo pathway; UDP from UMP (UMPK route): step 1/1. With respect to regulation, inhibited by UTP. In terms of biological role, catalyzes the reversible phosphorylation of UMP to UDP. This chain is Uridylate kinase, found in Burkholderia ambifaria (strain ATCC BAA-244 / DSM 16087 / CCUG 44356 / LMG 19182 / AMMD) (Burkholderia cepacia (strain AMMD)).